Reading from the N-terminus, the 423-residue chain is O-methyltransferase aoiF (423 aa).

S-adenosyl-L-methionine is bound at residue aspartate 273. Residue histidine 324 is the Proton acceptor of the active site.

This sequence belongs to the class I-like SAM-binding methyltransferase superfamily. Cation-independent O-methyltransferase family.

Its pathway is secondary metabolite biosynthesis. Its function is as follows. O-methyltransferase; part of the gene cluster that mediates the biosynthesis of a methylated derivative of known natural products orthosporin and diaporthin. Within the pathway, aoiF catalyzes the biotransformation of orthosporin to diaporthin but also of diaporthin to the final product, by performing a tandem methylation of the polyketide core. Orthosporin is produced by an oxidoreductase that has still to be identified and that catalyzes the stereospecific reduction of the carbonyl moiety of the hexaketide isocoumarin scaffold produced by the non-reducing polyketide synthase aoiG to generate the S-configured secondary alcohol at C-11. This is O-methyltransferase aoiF from Aspergillus oryzae (strain ATCC 42149 / RIB 40) (Yellow koji mold).